Consider the following 872-residue polypeptide: Cellulose synthase catalytic subunit [UDP-forming] (872 aa).

4 helical membrane passes run 30 to 50 (SAFSATLGCFWMILAWIFIPL), 151 to 171 (ILGIIVTFSLILALICVTQPF), 173 to 193 (PLAQFIFLMLLWGGALIVRRM), and 230 to 250 (LVCGLILLFAETYAWIVLVLG). Residues 271-364 (LWPSVDIFVP…FVSIFDCDHV (94 aa)) form a catalytic subdomain A region. Asp313 is a catalytic residue. 2 residues coordinate substrate: Asp360 and Asp362. A catalytic subdomain B region spans residues 441-501 (KPLDEIGGIA…GQRIRWARGM (61 aa)). Asp457 is an active-site residue. 5 helical membrane passes run 525 to 545 (VNAMFHFLSGIPRLIFLTAPL), 547 to 567 (FLLLHAYIIYAPALMIALFVL), 592 to 612 (IYETVLAWYIAPPTLVALINP), 640 to 660 (IFLVLLNLVGVAVGIWRYFYG), and 668 to 688 (VVVSMVWVFYNLIVLGGAVAV). The PilZ domain occupies 694 to 790 (QVRRSHRVEM…QHIDFVQCTF (97 aa)). The helical transmembrane segment at 833–853 (SVKGIFRVLTSLVSWVVSFIP) threads the bilayer.

It belongs to the glycosyltransferase 2 family. Mg(2+) serves as cofactor.

It localises to the cell inner membrane. The enzyme catalyses [(1-&gt;4)-beta-D-glucosyl](n) + UDP-alpha-D-glucose = [(1-&gt;4)-beta-D-glucosyl](n+1) + UDP + H(+). It functions in the pathway glycan metabolism; bacterial cellulose biosynthesis. Its activity is regulated as follows. Activated by bis-(3'-5') cyclic diguanylic acid (c-di-GMP). Functionally, catalytic subunit of cellulose synthase. It polymerizes uridine 5'-diphosphate glucose to cellulose, which is produced as an extracellular component for mechanical and chemical protection at the onset of the stationary phase, when the cells exhibit multicellular behavior (rdar morphotype). Coexpression of cellulose and thin aggregative fimbriae leads to a hydrophobic network with tightly packed cells embedded in a highly inert matrix. The sequence is that of Cellulose synthase catalytic subunit [UDP-forming] (bcsA) from Escherichia coli O157:H7.